The primary structure comprises 1194 residues: UPF0507 protein PICST_55861 (1194 aa).

The VPS9 domain occupies 324-475 (QSYDPEAVKF…LSSSLSDELS (152 aa)).

Belongs to the UPF0507 family.

This Scheffersomyces stipitis (strain ATCC 58785 / CBS 6054 / NBRC 10063 / NRRL Y-11545) (Yeast) protein is UPF0507 protein PICST_55861.